We begin with the raw amino-acid sequence, 285 residues long: Small ribosomal subunit protein uS2 (285 aa).

Positions 229-285 (AGLASGDAKPEAGAGEPLAEWEQELLAQANPNAEGSAEAAPAAATEEAPAAQTPADF) are disordered. Over residues 257–285 (ANPNAEGSAEAAPAAATEEAPAAQTPADF) the composition is skewed to low complexity.

The protein belongs to the universal ribosomal protein uS2 family.

The protein is Small ribosomal subunit protein uS2 of Nocardia farcinica (strain IFM 10152).